A 160-amino-acid chain; its full sequence is Phosphopantetheine adenylyltransferase (160 aa).

Position 10 (S10) interacts with substrate. ATP contacts are provided by residues 10–11 and H18; that span reads SF. The substrate site is built by K42, T74, and R88. Residues 89–91, E99, and 124–130 contribute to the ATP site; these read GLR and FYYISSR.

The protein belongs to the bacterial CoaD family. As to quaternary structure, homohexamer. It depends on Mg(2+) as a cofactor.

The protein localises to the cytoplasm. The catalysed reaction is (R)-4'-phosphopantetheine + ATP + H(+) = 3'-dephospho-CoA + diphosphate. It functions in the pathway cofactor biosynthesis; coenzyme A biosynthesis; CoA from (R)-pantothenate: step 4/5. Its function is as follows. Reversibly transfers an adenylyl group from ATP to 4'-phosphopantetheine, yielding dephospho-CoA (dPCoA) and pyrophosphate. This chain is Phosphopantetheine adenylyltransferase, found in Bdellovibrio bacteriovorus (strain ATCC 15356 / DSM 50701 / NCIMB 9529 / HD100).